A 688-amino-acid chain; its full sequence is MAKIRVYELAKELNISSKELITLLEEEFSVEVKNHMSAIEDEDANLIKELLSGKEKSEKTKEEDDEIETTAKNPIKESMNNKKSNKRDDKNEKVNTENAEDMGIITMTSDTITVKEISDKLEKSYAEVIKELMLMGVMASVNQEINFEMAEKLAAKFDMEILKEDEDEKEDLEDILKDNEEEEYLQKRSPIITVMGHVDHGKTSLLDAIRKSKITSTEAGGITQHIGAYTVELNGEAITFLDTPGHAAFTAMRARGAQVTDIVILVVAADDGIMPQTQEAISHCKAANVPLIVAINKIDRPGANIDKVKQELTEYGLVAEDWGGDTICVPVSAHTKEGIDDLLEMILLSSEILELKANPNRKAKGTVVEAKLDKGRGPVATLLIQNGTLRVGDSIVVGSTYGRIRAMFNDKGRNIESAGPSTPVEILGLSEVPEAGDKFYQVKEEKTARGIADKRKEKIRDEYLQSTHKVSLEDLYNQIQEGTVKELGLIVKADVQGSVEALKQSLEKLSTEEVKVRVIHGGVGAINETDVTLATASNGIILGFNVRPDNNAIIASERDGVDIKTYRVIYDAIEDIKSAMLGMLEPEFKEVVIGTAEVRQVYKISSVGTIAGAYIQTGKLARNAGARVIRDGIVIFESELASLKRFKDDAKEVAQGYECGLSIEKFNDIKEGDIIECFIMEEIKKKTL.

Composition is skewed to basic and acidic residues over residues 53 to 62 (GKEKSEKTKE) and 86 to 95 (KRDDKNEKVN). The interval 53–100 (GKEKSEKTKEEDDEIETTAKNPIKESMNNKKSNKRDDKNEKVNTENAE) is disordered. Positions 187–354 (KRSPIITVMG…MILLSSEILE (168 aa)) constitute a tr-type G domain. Residues 196-203 (GHVDHGKT) form a G1 region. 196-203 (GHVDHGKT) contacts GTP. A G2 region spans residues 221–225 (GITQH). Residues 242-245 (DTPG) are G3. Residues 242–246 (DTPGH) and 296–299 (NKID) contribute to the GTP site. The segment at 296-299 (NKID) is G4. The interval 332-334 (SAH) is G5.

It belongs to the TRAFAC class translation factor GTPase superfamily. Classic translation factor GTPase family. IF-2 subfamily.

It is found in the cytoplasm. Functionally, one of the essential components for the initiation of protein synthesis. Protects formylmethionyl-tRNA from spontaneous hydrolysis and promotes its binding to the 30S ribosomal subunits. Also involved in the hydrolysis of GTP during the formation of the 70S ribosomal complex. The chain is Translation initiation factor IF-2 from Clostridium botulinum (strain Kyoto / Type A2).